Reading from the N-terminus, the 318-residue chain is MAFHHIPVLLQETMEALAVRPGGTYIDCTVGGGGHAAEILRRSSPDGRLIGLDQDENALRAAGDRLAPFGDRVTLVRTNFEHVADVADRLGLGAADGVLMDIGVSSHQFDEGERGFSYHHDAPLDMRMDRTRPLTAAVLVNEWEEEEIARVIREYGEERWASRIAQFIVRARRQRPIETTGQLVEIIKAAIPASARREGGHPARRTFQAIRIAVNDELGALERGLEGALRVLRPGGRLAVITFHSLEDRIVKQTFARWAKPCTCPPDLPVCVCGKAPLAEPVTRKPVRASGAEVKANPRSRSATLRAVVKLQAGEEAK.

S-adenosyl-L-methionine-binding positions include 33–35 (GGH), Asp53, Phe80, Asp101, and Gln108.

It belongs to the methyltransferase superfamily. RsmH family.

It localises to the cytoplasm. The enzyme catalyses cytidine(1402) in 16S rRNA + S-adenosyl-L-methionine = N(4)-methylcytidine(1402) in 16S rRNA + S-adenosyl-L-homocysteine + H(+). Its function is as follows. Specifically methylates the N4 position of cytidine in position 1402 (C1402) of 16S rRNA. This Symbiobacterium thermophilum (strain DSM 24528 / JCM 14929 / IAM 14863 / T) protein is Ribosomal RNA small subunit methyltransferase H.